The primary structure comprises 23 residues: Septenin 2b (23 aa).

As to expression, expressed in skin glands.

Its subcellular location is the secreted. Functionally, may act as an antimicrobial peptide. The polypeptide is Septenin 2b (Osteopilus septentrionalis (Cuban treefrog)).